We begin with the raw amino-acid sequence, 512 residues long: CaM kinase-like vesicle-associated protein (512 aa).

The region spanning Tyr24–Ile286 is the Protein kinase domain. The interval Ala328–Gly347 is disordered. Over residues Ser332–Gly347 the composition is skewed to low complexity. Ser392 carries the post-translational modification Phosphoserine. The segment at Ala393–Ser512 is disordered. Residues Thr398 to Pro439 show a composition bias toward polar residues. Thr446 carries the phosphothreonine modification. Residues Thr449 to Ser460 are compositionally biased toward polar residues. Positions Ala461–Pro478 are enriched in low complexity. Phosphothreonine is present on Thr470.

Belongs to the protein kinase superfamily. CAMK Ser/Thr protein kinase family. Interacts with calmodulin, in the presence of calcium. Ca(2+) is required as a cofactor.

The protein resides in the cell membrane. The protein localises to the cytoplasmic vesicle membrane. Does not appear to have detectable kinase activity. The sequence is that of CaM kinase-like vesicle-associated protein (Camkv) from Mus musculus (Mouse).